A 138-amino-acid chain; its full sequence is Acidic phospholipase A2 PePLA2 (138 aa).

An N-terminal signal peptide occupies residues 1–16 (MRTLWIMAVLLLGVEG). Disulfide bonds link Cys42–Cys131, Cys44–Cys60, Cys59–Cys110, Cys65–Cys138, Cys66–Cys103, Cys73–Cys97, and Cys91–Cys101. Ca(2+) is bound by residues Tyr43, Gly45, and Gly47. His63 is an active-site residue. Asp64 provides a ligand contact to Ca(2+). Asp104 is a catalytic residue.

Belongs to the phospholipase A2 family. Group II subfamily. D49 sub-subfamily. Requires Ca(2+) as cofactor. As to expression, expressed by the venom gland.

The protein resides in the secreted. The enzyme catalyses a 1,2-diacyl-sn-glycero-3-phosphocholine + H2O = a 1-acyl-sn-glycero-3-phosphocholine + a fatty acid + H(+). Functionally, PLA2 catalyzes the calcium-dependent hydrolysis of the 2-acyl groups in 3-sn-phosphoglycerides. The protein is Acidic phospholipase A2 PePLA2 of Protobothrops elegans (Elegant pitviper).